The primary structure comprises 131 residues: D-ribose pyranase (131 aa).

The active-site Proton donor is the histidine 20. Residues aspartate 28, histidine 98, and tyrosine 120–asparagine 122 each bind substrate.

It belongs to the RbsD / FucU family. RbsD subfamily. In terms of assembly, homodecamer.

The protein localises to the cytoplasm. The catalysed reaction is beta-D-ribopyranose = beta-D-ribofuranose. Its pathway is carbohydrate metabolism; D-ribose degradation; D-ribose 5-phosphate from beta-D-ribopyranose: step 1/2. Functionally, catalyzes the interconversion of beta-pyran and beta-furan forms of D-ribose. The protein is D-ribose pyranase of Clostridium perfringens (strain ATCC 13124 / DSM 756 / JCM 1290 / NCIMB 6125 / NCTC 8237 / Type A).